Reading from the N-terminus, the 1004-residue chain is Ephrin type-B receptor 2 (1004 aa).

The N-terminal stretch at 1–19 (MGPLWFCCLPLALLPLLAA) is a signal peptide. Residues 20-544 (VEETLMDSTT…QTSVQEKLPL (525 aa)) are Extracellular-facing. The region spanning 21–203 (EETLMDSTTA…FYRKCPRVIQ (183 aa)) is the Eph LBD domain. 2 disulfides stabilise this stretch: C63–C185 and C98–C108. 5 N-linked (GlcNAc...) asparagine glycosylation sites follow: N266, N337, N429, N478, and N483. Fibronectin type-III domains follow at residues 325-435 (IPSA…TNQA) and 436-531 (APSA…TMTE). Residues 545–565 (IIGSSAAGLVFLIAVVVIIIV) form a helical membrane-spanning segment. Residues 566 to 1004 (CNRRRGFERA…QMNQIQSVEV (439 aa)) lie on the Cytoplasmic side of the membrane. The Protein kinase domain occupies 639 to 902 (VKIEQVIGAG…QIVNTLDKMI (264 aa)). ATP is bound by residues 645 to 653 (IGAGEFGEV) and K671. D764 functions as the Proton acceptor in the catalytic mechanism. An SAM domain is found at 931-995 (TSFNTVDEWL…LNSIQVMRAQ (65 aa)). The PDZ-binding motif lies at 1002-1004 (VEV).

It belongs to the protein kinase superfamily. Tyr protein kinase family. Ephrin receptor subfamily. In terms of assembly, heterotetramer upon binding of the ligand. The heterotetramer is composed of an ephrin dimer and a receptor dimer. Oligomerization is probably required to induce biological responses. In terms of processing, ligand binding induces cleavage by matrix metalloproteinases (MMPs) such as MMP7/MMP9, producing an EphB2/N-terminal fragment (NTF) and a C-terminal long fragment (EphB2-LF). EphB2-LF is further cleaved by MMPs, producing EphB2/CTF1 which is further cleaved by the PS1/gamma-secretase producing EphB2/CTF2. Wide tissue distribution throughout development and sustained expression in adult brain. The longer form (CEK5+) is specifically expressed in the central nervous system.

It localises to the cell membrane. It is found in the cell projection. Its subcellular location is the axon. The protein resides in the dendrite. The enzyme catalyses L-tyrosyl-[protein] + ATP = O-phospho-L-tyrosyl-[protein] + ADP + H(+). In terms of biological role, receptor tyrosine kinase which binds promiscuously transmembrane ephrin-B family ligands residing on adjacent cells, leading to contact-dependent bidirectional signaling into neighboring cells. The signaling pathway downstream of the receptor is referred to as forward signaling while the signaling pathway downstream of the ephrin ligand is referred to as reverse signaling. Functions in axon guidance during development. In addition to axon guidance, also regulates dendritic spines development and maturation and stimulates the formation of excitatory synapses. The protein is Ephrin type-B receptor 2 (EPHB2) of Gallus gallus (Chicken).